The following is a 1171-amino-acid chain: Pyruvate:ferredoxin oxidoreductase (1171 aa).

Threonine 29 and arginine 112 together coordinate pyruvate. CoA-binding positions include 424–428 (SDGTV), lysine 456, asparagine 556, and asparagine 598. 4Fe-4S ferredoxin-type domains are found at residues 677-706 (NIPQWQPENCIQCNQCSLVCPHAAIRPYLA) and 733-764 (FRIQVSPLDCTGCGNCADVCPAKVKALTMVPL). [4Fe-4S] cluster-binding residues include cysteine 686, cysteine 689, cysteine 692, cysteine 696, cysteine 742, cysteine 745, cysteine 748, cysteine 752, cysteine 809, and cysteine 812. Thiamine diphosphate is bound by residues glutamate 814, cysteine 837, 967–969 (DGW), and 995–1000 (TEVYSN). Cysteine 837 is a [4Fe-4S] cluster binding site. Mg(2+) contacts are provided by aspartate 967, threonine 995, and valine 997. Asparagine 1000 serves as a coordination point for pyruvate. Cysteine 1075 lines the [4Fe-4S] cluster pocket.

Belongs to the pyruvate:ferredoxin/flavodoxin oxidoreductase family. As to quaternary structure, homodimer. The cofactor is [4Fe-4S] cluster. Thiamine diphosphate is required as a cofactor. It depends on Mg(2+) as a cofactor.

It catalyses the reaction 2 oxidized [2Fe-2S]-[ferredoxin] + pyruvate + CoA = 2 reduced [2Fe-2S]-[ferredoxin] + acetyl-CoA + CO2 + H(+). Catalyzes the oxidative decarboxylation of pyruvate to acetyl-CoA and carbon dioxide. The two electrons that are generated as a result of pyruvate decarboxylation are used in the reduction of low potential ferredoxins, which provide reducing equivalents for central metabolism. Also catalyzes the reverse reaction, i.e. the synthesis of pyruvate from acetyl-CoA and carbon dioxide. Appears to function physiologically in both directions. The oxidation of pyruvate by PFOR is required to connect glycolysis and the Wood-Ljungdahl pathway of reductive acetogenesis. The conversion of acetyl-CoA to pyruvate links the Wood-Ljungdahl pathway of autotrophic CO2 fixation to the reductive tricarboxylic acid cycle. Can use methyl viologen as electron carrier in vitro. In Moorella thermoacetica (strain ATCC 39073 / JCM 9320), this protein is Pyruvate:ferredoxin oxidoreductase.